The primary structure comprises 371 residues: DNA-directed RNA polymerase subunit alpha (371 aa).

The alpha N-terminal domain (alpha-NTD) stretch occupies residues 1–248 (MSVKYGKFEM…KHFEVFNQFN (248 aa)). An alpha C-terminal domain (alpha-CTD) region spans residues 264–371 (DQDELMDKLS…KELVKHEDAK (108 aa)).

The protein belongs to the RNA polymerase alpha chain family. Homodimer. The RNAP catalytic core consists of 2 alpha, 1 beta, 1 beta' and 1 omega subunit. When a sigma factor is associated with the core the holoenzyme is formed, which can initiate transcription.

The enzyme catalyses RNA(n) + a ribonucleoside 5'-triphosphate = RNA(n+1) + diphosphate. In terms of biological role, DNA-dependent RNA polymerase catalyzes the transcription of DNA into RNA using the four ribonucleoside triphosphates as substrates. In Protochlamydia amoebophila (strain UWE25), this protein is DNA-directed RNA polymerase subunit alpha.